We begin with the raw amino-acid sequence, 388 residues long: Succinate--CoA ligase [ADP-forming] subunit beta (388 aa).

Residues 9–244 (KQLFAEYGLP…PSQDDAREAH (236 aa)) enclose the ATP-grasp domain. Residues Lys-46, 53 to 55 (GRG), Glu-99, Thr-102, and Glu-107 contribute to the ATP site. Residues Asn-199 and Asp-213 each contribute to the Mg(2+) site. Residues Asn-264 and 321 to 323 (GIV) contribute to the substrate site.

The protein belongs to the succinate/malate CoA ligase beta subunit family. In terms of assembly, heterotetramer of two alpha and two beta subunits. Mg(2+) serves as cofactor.

It catalyses the reaction succinate + ATP + CoA = succinyl-CoA + ADP + phosphate. The enzyme catalyses GTP + succinate + CoA = succinyl-CoA + GDP + phosphate. It functions in the pathway carbohydrate metabolism; tricarboxylic acid cycle; succinate from succinyl-CoA (ligase route): step 1/1. Succinyl-CoA synthetase functions in the citric acid cycle (TCA), coupling the hydrolysis of succinyl-CoA to the synthesis of either ATP or GTP and thus represents the only step of substrate-level phosphorylation in the TCA. The beta subunit provides nucleotide specificity of the enzyme and binds the substrate succinate, while the binding sites for coenzyme A and phosphate are found in the alpha subunit. In Pseudomonas entomophila (strain L48), this protein is Succinate--CoA ligase [ADP-forming] subunit beta.